A 380-amino-acid chain; its full sequence is Probable cytosolic iron-sulfur protein assembly protein 1 (380 aa).

7 WD repeats span residues 10–49, 56–108, 135–175, 182–221, 228–275, 299–338, and 346–380; these read AHND…KFPL, THKR…VEYD, GHEN…EEFE, DHSQ…DEWS, GHEG…EEDK, VHKY…KWVI, and HGVH…LWNV.

This sequence belongs to the WD repeat CIA1 family. Interacts with NAR1.

The protein localises to the cytoplasm. Its subcellular location is the nucleus. Its function is as follows. Essential component of the cytosolic iron-sulfur (Fe/S) protein assembly machinery. Required for the maturation of extramitochondrial Fe/S proteins. The protein is Probable cytosolic iron-sulfur protein assembly protein 1 of Candida dubliniensis (strain CD36 / ATCC MYA-646 / CBS 7987 / NCPF 3949 / NRRL Y-17841) (Yeast).